We begin with the raw amino-acid sequence, 945 residues long: MGARSGARGALLLALLLCWDPRLSQAGTDSGSEVLPDSFPSAPAEPLPYFLQEPQDAYIVKNKPVELRCRAFPATQIYFKCNGEWVSQNDHVTQEGLDEATGLRVREVQIEVSRQQVEELFGLEDYWCQCVAWSSAGTTKSRRAYVRIAYLRKNFDQEPLGKEVPLDHEVLLQCRPPEGVPVAEVEWLKNEDVIDPTQDTNFLLTIDHNLIIRQARLSDTANYTCVAKNIVAKRRSTTATVIVYVNGGWSSWAEWSPCSNRCGRGWQKRTRTCTNPAPLNGGAFCEGQAFQKTACTTICPVDGAWTEWSKWSACSTECAHWRSRECMAPPPQNGGRDCSGTLLDSKNCTDGLCMQNKKTLSDPNSHLLEASGDAALYAGLVVAIFVVVAILMAVGVVVYRRNCRDFDTDITDSSAALTGGFHPVNFKTARPSNPQLLHPSVPPDLTASAGIYRGPVYALQDSTDKIPMTNSPLLDPLPSLKVKVYSSSTTGSGPGLADGADLLGVLPPGTYPSDFARDTHFLHLRSASLGSQQLLGLPRDPGSSVSGTFGCLGGRLSIPGTGVSLLVPNGAIPQGKFYEMYLLINKAESTLPLSEGTQTVLSPSVTCGPTGLLLCRPVILTMPHCAEVSARDWIFQLKTQAHQGHWEEVVTLDEETLNTPCYCQLEPRACHILLDQLGTYVFTGESYSRSAVKRLQLAVFAPALCTSLEYSLRVYCLEDTPVALKEVLELERTLGGYLVEEPKPLMFKDSYHNLRLSLHDLPHAHWRSKLLAKYQEIPFYHIWSGSQKALHCTFTLERHSLASTELTCKICVRQVEGEGQIFQLHTTLAETPAGSLDTLCSAPGSTVTTQLGPYAFKIPLSIRQKICNSLDAPNSRGNDWRMLAQKLSMDRYLNYFATKASPTGVILDLWEALQQDDGDLNSLASALEEMGKSEMLVAVATDGDC.

The N-terminal stretch at 1 to 26 (MGARSGARGALLLALLLCWDPRLSQA) is a signal peptide. At 27–377 (GTDSGSEVLP…LEASGDAALY (351 aa)) the chain is on the extracellular side. The Ig-like domain maps to 48–145 (PYFLQEPQDA…AGTTKSRRAY (98 aa)). Disulfide bonds link cysteine 69–cysteine 130, cysteine 81–cysteine 128, cysteine 174–cysteine 225, cysteine 258–cysteine 295, cysteine 262–cysteine 299, cysteine 273–cysteine 285, cysteine 314–cysteine 348, cysteine 318–cysteine 353, and cysteine 326–cysteine 338. The region spanning 147 to 242 (RIAYLRKNFD…KRRSTTATVI (96 aa)) is the Ig-like C2-type domain. Asparagine 222 carries N-linked (GlcNAc...) asparagine glycosylation. TSP type-1 domains are found at residues 246–300 (NGGW…TICP) and 302–354 (DGAW…GLCM). Asparagine 347 is a glycosylation site (N-linked (GlcNAc...) asparagine). A helical transmembrane segment spans residues 378–398 (AGLVVAIFVVVAILMAVGVVV). The Cytoplasmic segment spans residues 399-945 (YRRNCRDFDT…LVAVATDGDC (547 aa)). Cysteine 403 carries the S-palmitoyl cysteine lipid modification. The ZU5 domain maps to 543–686 (SSVSGTFGCL…LGTYVFTGES (144 aa)). Tyrosine 581 carries the phosphotyrosine modification. The segment at 689–838 (RSAVKRLQLA…AETPAGSLDT (150 aa)) is UPA domain. Positions 707–725 (SLEYSLRVYCLEDTPVALK) are interaction with DCC. The region spanning 865 to 943 (KICNSLDAPN…EMLVAVATDG (79 aa)) is the Death domain.

It belongs to the unc-5 family. Interacts with the cytoplasmic part of DCC. Interacts with GNAI2 via its cytoplasmic part. Interacts (via death domain) with DAPK1 (via death domain). Interacts (via extracellular domain) with FLRT3 (via extracellular domain); the interaction is direct. Interacts (via extracellular domain) with FLRT2 and FLRT3 (via extracellular domain), but has higher affinity for FLRT3. Identified in a complex with FLRT3 and ADGRL3; does not interact with ADGRL3 by itself. In terms of processing, phosphorylated on cytoplasmic tyrosine residues. Proteolytically cleaved by caspases during apoptosis. The cleavage does not take place when the receptor is associated with netrin ligand. Its cleavage by caspases is required to induce apoptosis. Post-translationally, palmitoylation is required for pro-apoptotic activity, but not for location at lipid rafts. As to expression, highly expressed in brain. Also expressed at lower level in developing lung, cartilage, kidney and hematopoietic and immune tissues.

The protein localises to the cell membrane. The protein resides in the membrane raft. In terms of biological role, receptor for netrin required for axon guidance. Mediates axon repulsion of neuronal growth cones in the developing nervous system upon ligand binding. Axon repulsion in growth cones may be caused by its association with DCC that may trigger signaling for repulsion. Functions as a netrin receptor that negatively regulates vascular branching during angiogenesis. Mediates retraction of tip cell filopodia on endothelial growth cones in response to netrin. It also acts as a dependence receptor required for apoptosis induction when not associated with netrin ligand. Mediates apoptosis by activating DAPK1. In the absence of NTN1, activates DAPK1 by reducing its autoinhibitory phosphorylation at Ser-308 thereby increasing its catalytic activity. In Homo sapiens (Human), this protein is Netrin receptor UNC5B (UNC5B).